An 87-amino-acid chain; its full sequence is Large ribosomal subunit protein bL31B (87 aa).

The protein belongs to the bacterial ribosomal protein bL31 family. Type B subfamily. In terms of assembly, part of the 50S ribosomal subunit.

This is Large ribosomal subunit protein bL31B from Ralstonia nicotianae (strain ATCC BAA-1114 / GMI1000) (Ralstonia solanacearum).